A 187-amino-acid chain; its full sequence is ECF RNA polymerase sigma factor SigK (187 aa).

Residues 30-96 (YDHTKSRVYG…RAVDRVRCEQ (67 aa)) are sigma-70 factor domain-2. The Interaction with polymerase core subunit RpoC motif lies at 53 to 56 (ETTQ). The segment at 133-182 (CLKALTDTQRQCIELAYYGGLTYVEVSRRLAANLSTIKSRMRDALRSLRN) is sigma-70 factor domain-4. The H-T-H motif DNA-binding region spans 155-174 (YVEVSRRLAANLSTIKSRMR).

It belongs to the sigma-70 factor family. ECF subfamily. As to quaternary structure, interacts transiently with the RNA polymerase catalytic core formed by RpoA, RpoB, RpoC and RpoZ (2 alpha, 1 beta, 1 beta' and 1 omega subunit) to form the RNA polymerase holoenzyme that can initiate transcription. Interacts (via sigma-70 factor domain 4) with anti-sigma-K factor RskA.

Functionally, sigma factors are initiation factors that promote the attachment of RNA polymerase to specific initiation sites and are then released. Extracytoplasmic function (ECF) sigma factors are held in an inactive form by an anti-sigma factor until released by regulated intramembrane proteolysis. This is ECF RNA polymerase sigma factor SigK (sigK) from Mycobacterium tuberculosis (strain ATCC 25177 / H37Ra).